We begin with the raw amino-acid sequence, 106 residues long: Nucleoid-associated protein MCCL_1934 (106 aa).

The segment at 1-34 is disordered; the sequence is MRGGGNMQQMMKQMQKMQKKMAEEQEKLKEERIE. Residues 7–16 show a composition bias toward low complexity; it reads MQQMMKQMQK. Residues 20–34 are compositionally biased toward basic and acidic residues; that stretch reads KMAEEQEKLKEERIE.

The protein belongs to the YbaB/EbfC family. As to quaternary structure, homodimer.

Its subcellular location is the cytoplasm. It localises to the nucleoid. In terms of biological role, binds to DNA and alters its conformation. May be involved in regulation of gene expression, nucleoid organization and DNA protection. This is Nucleoid-associated protein MCCL_1934 from Macrococcus caseolyticus (strain JCSC5402) (Macrococcoides caseolyticum).